Reading from the N-terminus, the 122-residue chain is U1 small nuclear ribonucleoprotein C (122 aa).

The Matrin-type zinc-finger motif lies at 4–36 (YFCDYCDTYLTHDSPSVRKTHCSGRKHKDNVKM).

This sequence belongs to the U1 small nuclear ribonucleoprotein C family. In terms of assembly, U1 snRNP is composed of the 7 core Sm proteins B/B', D1, D2, D3, E, F and G that assemble in a heptameric protein ring on the Sm site of the small nuclear RNA to form the core snRNP, and at least 3 U1 snRNP-specific proteins U1-70K, U1-A and U1-C. U1-C interacts with U1 snRNA and the 5' splice-site region of the pre-mRNA.

It localises to the nucleus. Component of the spliceosomal U1 snRNP, which is essential for recognition of the pre-mRNA 5' splice-site and the subsequent assembly of the spliceosome. U1-C is directly involved in initial 5' splice-site recognition for both constitutive and regulated alternative splicing. The interaction with the 5' splice-site seems to precede base-pairing between the pre-mRNA and the U1 snRNA. Stimulates commitment or early (E) complex formation by stabilizing the base pairing of the 5' end of the U1 snRNA and the 5' splice-site region. This Ciona intestinalis (Transparent sea squirt) protein is U1 small nuclear ribonucleoprotein C.